Here is a 321-residue protein sequence, read N- to C-terminus: uncharacterized protein (321 aa).

This sequence belongs to the NAD(P)-dependent epimerase/dehydratase family.

This is an uncharacterized protein from Staphylococcus aureus (strain MRSA252).